Reading from the N-terminus, the 350-residue chain is MRVSEDTSTKEVFERVAADFLQLYKRCVLAQTREVRSSDRERCEELVRRNALARELCKLHQTLCFVYENDALYGIVLDALDLEGIYGRVEEGPGADDYQDRLVQELLRYFKDEFFTWCDKPLCARCGTAKKQAAVGHGKPTVEEARYRCTVVELFRCEDCGDVARFPRYNDPLKLLETRTGRCGEWCNLFMLILRSFGIEARYTWNREDHVWCEVYSNALKRWVHVDSCEKSFDEPHIYSVNWNKAMSYVIAFSNRSVKDVSRRYIVRNRLPRDQIDEDDLQFLTKYLTKLLRLQLPDEERYLLHCRDELEAIDLLGSKTAPMEIPPAAGAAGRQSGSADWKRQRGEDGR.

Positions 123, 126, 157, and 160 each coordinate Zn(2+). Cys-183 functions as the Nucleophile in the catalytic mechanism. Catalysis depends on residues His-210 and Asp-227. A substrate-binding site is contributed by Glu-230. The tract at residues 324-350 (EIPPAAGAAGRQSGSADWKRQRGEDGR) is disordered. A compositionally biased stretch (basic and acidic residues) spans 340-350 (DWKRQRGEDGR).

Belongs to the transglutaminase-like superfamily. PNGase family. Requires Zn(2+) as cofactor.

It is found in the cytoplasm. It catalyses the reaction Hydrolysis of an N(4)-(acetyl-beta-D-glucosaminyl)asparagine residue in which the glucosamine residue may be further glycosylated, to yield a (substituted) N-acetyl-beta-D-glucosaminylamine and a peptide containing an aspartate residue.. In terms of biological role, specifically deglycosylates the denatured form of N-linked glycoproteins in the cytoplasm and assists their proteasome-mediated degradation. Cleaves the beta-aspartyl-glucosamine (GlcNAc) of the glycan and the amide side chain of Asn, converting Asn to Asp. Prefers proteins containing high-mannose over those bearing complex type oligosaccharides. Can recognize misfolded proteins in the endoplasmic reticulum that are exported to the cytosol to be destroyed and deglycosylate them, while it has no activity toward native proteins. Deglycosylation is a prerequisite for subsequent proteasome-mediated degradation of some, but not all, misfolded glycoproteins. This chain is Peptide-N(4)-(N-acetyl-beta-glucosaminyl)asparagine amidase (PNG1), found in Eremothecium gossypii (strain ATCC 10895 / CBS 109.51 / FGSC 9923 / NRRL Y-1056) (Yeast).